We begin with the raw amino-acid sequence, 313 residues long: Dioxygenase swnH2 (313 aa).

Histidine 155, aspartate 157, and histidine 232 together coordinate Fe cation.

Belongs to the PhyH family. Homodimer. Fe cation is required as a cofactor.

It participates in mycotoxin biosynthesis. Aminotransferase; part of the gene cluster that mediates the biosynthesis of swainsonine (SW), a cytotoxic fungal alkaloid and a potential cancer therapy drug. Swainsonine production occurs via a multibranched pathway and is dispensable for fungal colonization of plants and infection of insect hosts. The first step of swainsonine biosynthesis is the production of the precursor pipecolic acid (PA) via conversion of L-lysine (Lys) to 1-piperideine-6-carboxylate (P6C) by the aminotransferase swnA, the latter being further reduced to PA by the reductase swnR. The PKS-NRPS hybrid synthetase swnK uptakes and condensates PA and malonyl-CoA with and without skipping of the ketoreductase (KR) domain in order to produce 3 intermediates, 1-oxoindolizidine, (1S)-1-hydroxyindolizin, and (1R)-1-hydroxyindolizine; with the transisomer (1S)-1-hydroxyindolizin being predominant. The terminal thioester reductase (TE) domain of swnK is involved in reduction of the thioester bond to release the intermediate aldehydes. The oxidoreductase swnN could contribute to the reduction of 1-oxoindolizidine to (1S)-1-hydroxyindolizin and (1R)-1-hydroxyindolizine, contributing to the major route of SW production. The dioxygenase swnH2 would be responsible for the oxidization of (1R)-1-hydroxyindolizine into (1R,2S)-1,2-dihydroxyindolizine and of (1S)-1-hydroxyindolizin to yield both (1R,2S)-1,2-dihydroxyindolizine and (1S,2S)-1,2-dihydroxyindolizine. The dioxygenase swnH1 then performs the conversion of the 1,2-dihydroxyindolizine epimers to SW. The chain is Dioxygenase swnH2 from Arthroderma benhamiae (strain ATCC MYA-4681 / CBS 112371) (Trichophyton mentagrophytes).